The primary structure comprises 283 residues: Elongation factor Ts (283 aa).

Residues 80 to 83 (TDFV) are involved in Mg(2+) ion dislocation from EF-Tu.

This sequence belongs to the EF-Ts family.

Its subcellular location is the cytoplasm. Associates with the EF-Tu.GDP complex and induces the exchange of GDP to GTP. It remains bound to the aminoacyl-tRNA.EF-Tu.GTP complex up to the GTP hydrolysis stage on the ribosome. The polypeptide is Elongation factor Ts (Shigella boydii serotype 18 (strain CDC 3083-94 / BS512)).